We begin with the raw amino-acid sequence, 668 residues long: Probable syringafactin export ATP-binding/permease protein SyfD (668 aa).

The ABC transporter domain occupies 22–260 (LRLQQVSRSF…APEAQPATPP (239 aa)). 58-65 (GASGSGKS) provides a ligand contact to ATP. Residues 242–263 (RRTAQTTQPAPEAQPATPPGPA) form a disordered region. Residues 245 to 256 (AQTTQPAPEAQP) are compositionally biased toward low complexity. The next 5 membrane-spanning stretches (helical) occupy residues 267–287 (LLASLGLFREAFNMAWIALIS), 293–313 (LLTMLGIIIGITSVVSISAIG), 541–561 (LTLLLSLIAVISLVVGGIGVM), 602–622 (MGGVIGIGLSYAIGYLFTLFV), and 631–651 (LASVVTAFACSTLIGVLFGFV).

It belongs to the ABC transporter superfamily. Macrolide exporter (TC 3.A.1.122) family. Probably part of a tripartite efflux system, which is composed of an inner membrane transporter, a periplasmic membrane fusion protein, and an outer membrane component.

The protein resides in the cell inner membrane. Its function is as follows. Probably involved in the export of syringafactins. This is Probable syringafactin export ATP-binding/permease protein SyfD from Pseudomonas syringae pv. tomato (strain ATCC BAA-871 / DC3000).